Reading from the N-terminus, the 348-residue chain is MSKETLILLYGGRSAEREVSVLSAESVMRAINYDKFFVKTYFITQVGQFIKTQEFDEMPSSDEKLMTNQTVDLDKMVRPSDIYDDNAIVFPVLHGPMGEDGSIQGFLEVLRMPYVGTNILSSSVAMDKITTKQVLATVGVPQVAYQTYFEGDDLEHAIKLSLETLSFPIFVKPANMGSSVGISKATDESSLRSAIDLALKYDSRILIEQGVTAREIEVGILGNNDVKTTFPGEVVKDVDFYDYDAKYIDNKITMDIPAKVDEATMEAMRQYASKAFKAIGACGLSRCDFFLTKDGQIFLNELNTMPGFTQWSMYPLLWENMGLTYSDLIEKLVMLAKEMFEKRESHLI.

Positions K132–M334 constitute an ATP-grasp domain. L162–E217 is a binding site for ATP. D288, E301, and N303 together coordinate Mg(2+).

The protein belongs to the D-alanine--D-alanine ligase family. It depends on Mg(2+) as a cofactor. Requires Mn(2+) as cofactor.

Its subcellular location is the cytoplasm. It catalyses the reaction 2 D-alanine + ATP = D-alanyl-D-alanine + ADP + phosphate + H(+). It participates in cell wall biogenesis; peptidoglycan biosynthesis. Cell wall formation. The sequence is that of D-alanine--D-alanine ligase from Streptococcus agalactiae serotype Ia (strain ATCC 27591 / A909 / CDC SS700).